Consider the following 589-residue polypeptide: Proline--tRNA ligase (589 aa).

Belongs to the class-II aminoacyl-tRNA synthetase family. ProS type 1 subfamily. Homodimer.

It localises to the cytoplasm. It catalyses the reaction tRNA(Pro) + L-proline + ATP = L-prolyl-tRNA(Pro) + AMP + diphosphate. Its function is as follows. Catalyzes the attachment of proline to tRNA(Pro) in a two-step reaction: proline is first activated by ATP to form Pro-AMP and then transferred to the acceptor end of tRNA(Pro). As ProRS can inadvertently accommodate and process non-cognate amino acids such as alanine and cysteine, to avoid such errors it has two additional distinct editing activities against alanine. One activity is designated as 'pretransfer' editing and involves the tRNA(Pro)-independent hydrolysis of activated Ala-AMP. The other activity is designated 'posttransfer' editing and involves deacylation of mischarged Ala-tRNA(Pro). The misacylated Cys-tRNA(Pro) is not edited by ProRS. The polypeptide is Proline--tRNA ligase (Corynebacterium aurimucosum (strain ATCC 700975 / DSM 44827 / CIP 107346 / CN-1) (Corynebacterium nigricans)).